The sequence spans 172 residues: Ribosome maturation factor RimM (172 aa).

Residues 96 to 168 (EGEFYYHQII…RVDVELMEGL (73 aa)) enclose the PRC barrel domain.

This sequence belongs to the RimM family. Binds ribosomal protein uS19.

It is found in the cytoplasm. Its function is as follows. An accessory protein needed during the final step in the assembly of 30S ribosomal subunit, possibly for assembly of the head region. Essential for efficient processing of 16S rRNA. May be needed both before and after RbfA during the maturation of 16S rRNA. It has affinity for free ribosomal 30S subunits but not for 70S ribosomes. The chain is Ribosome maturation factor RimM from Streptococcus pyogenes serotype M1.